The sequence spans 505 residues: Glutamate--tRNA ligase (505 aa).

A 'HIGH' region motif is present at residues 12 to 22 (PSPTGDPHVGT). The 'KMSKS' region signature appears at 253–257 (KLSKR). Lys256 provides a ligand contact to ATP.

It belongs to the class-I aminoacyl-tRNA synthetase family. Glutamate--tRNA ligase type 1 subfamily. As to quaternary structure, monomer.

Its subcellular location is the cytoplasm. It carries out the reaction tRNA(Glu) + L-glutamate + ATP = L-glutamyl-tRNA(Glu) + AMP + diphosphate. Catalyzes the attachment of glutamate to tRNA(Glu) in a two-step reaction: glutamate is first activated by ATP to form Glu-AMP and then transferred to the acceptor end of tRNA(Glu). The protein is Glutamate--tRNA ligase of Chlamydia caviae (strain ATCC VR-813 / DSM 19441 / 03DC25 / GPIC) (Chlamydophila caviae).